The chain runs to 458 residues: MSNELRLEDNYVPTSDTLVVFKQLMKLPVTVLYDLTLSWFAKFGGSFDGDIYLLTETLDLLIEKGVRRNVIVNRILYVYWPDGLNVFQLAEIDCHLMISKPEKFKWLPSKALRGDGKPYVVKLQPAKFIENLQTDLAKIYHCHVYMFKHPSLPVLITRIQLFDSNNLFLSTPNIGSINKESLYNKLDKFQGKPLISRRPYYVAFPLNSPIIFHSVDKDIYARLVLQSISRTISERETIIFKPVQKIPVKSIHNIMTLLGPSRFAESMGPWECYASANFERSPLHDYKKHQGLTGKKVMVREFDDSFLNDDENFYGKEEPEIRRLRLEKNMIKFKGSANGVMDQKYNDLKEFNEHVHNIRNGKKNEDSGEPVYISRYSSLVPIEKVGFTLKNEINSRIITIKLKFNGNDIFGGLHELCDKNLINIDKVPGWLAGENGSFSGTIMNGDFQREQVAKGGLL.

It belongs to the CENP-N/CHL4 family. Forms a heterodimer with IML3. CHL4-IML3 is part of a larger constitutive centromere-associated network (CCAN) (also known as central kinetochore CTF19 complex in yeast), which is composed of at least AME1, CHL4, CNN1, CTF3, CTF19, IML3, MCM16, MCM21, MCM22, MHF1, MHF2, MIF2, NKP1, NKP2, OKP1 and WIP1. Interacts with CTF3 and CTF19.

Its subcellular location is the nucleus. It localises to the chromosome. The protein resides in the centromere. It is found in the kinetochore. Component of the kinetochore, a multiprotein complex that assembles on centromeric DNA and attaches chromosomes to spindle microtubules, mediating chromosome segregation and sister chromatid segregation during meiosis and mitosis. Component of the inner kinetochore constitutive centromere-associated network (CCAN), which serves as a structural platform for outer kinetochore assembly. This chain is Inner kinetochore subunit CHL4 (CHL4), found in Saccharomyces cerevisiae (strain ATCC 204508 / S288c) (Baker's yeast).